Here is an 842-residue protein sequence, read N- to C-terminus: MSEYNFTKIEKKWQNYWDKHKTYKVNEDPNIPKEKRIYILDMFPYPSANGLHVGHPEGYTATDILTRYKLLNGFNVLHPMGFDSFGLPAENYAIQTGEHPKKITEKNIEKFKEQIKALGFAYDWDREIRTHDENYYKWTQWIFLKLYKKGLAYIKEMPVWYCPDLGTVLSNEEVIQTPDGPRSERGFHKVQRKPLRQWVLKITEYAERLIKDLEEIDWPESVKEMQKNWIGKSIGAEIEFSIKASKEKIKVFTTRPDTIFGVTYLVLAPEHNIVDKITKDELKTIIAEYKDKEILKSDLERTSLEKDKTGVFTGAYAINPITEEEIPIWIGSYVLGIYGTGAVMSVPAHDERDFEFAKKYNLPIKQVVSQTGNNEILTKPFTENGISINTPEEFNNLKTEKVKTKVIEWLTKNKKGQKKVNYKLRDWIFSRQRYWGEPIPIIIDDDLNEIPLEEDELPLRLPEIENYKPSDTGESPLSKVQNWVNVKRNGKIYKRETNTMPQWAGSCWYYIRYLDPNNEKEFASKEKINYWMPVDLYIGGAEHSVLHLLYARFWHKVLYDLGYVNTKEPFKKLINQGMITSFAYQDENGILIPNDEVKKRDNKFFSKTNNKELKQIIAKMSKSLKNIINPDDIIKEYGADSMRIYEMFMGPLTDSKPWNTQGLIGIFRFLNKIWAIKNKELTKESAAKEIISGLHKTIKKVTEDIENLNFNTAISSLMIFINELLKHDKNYLEIFKPLTIILAPFAPHLGEELWEYMGEQPSIFKNAKWPKYDPNLIIDNTREIVLQVNGKIKDKIILNKGINEDTLKDIALKNHKIMQNIQNKQIIKIITVKDKLINIVTK.

Residues Pro-44–His-55 carry the 'HIGH' region motif. The short motif at Lys-619–Ser-623 is the 'KMSKS' region element. An ATP-binding site is contributed by Lys-622.

Belongs to the class-I aminoacyl-tRNA synthetase family.

The protein localises to the cytoplasm. It catalyses the reaction tRNA(Leu) + L-leucine + ATP = L-leucyl-tRNA(Leu) + AMP + diphosphate. This is Leucine--tRNA ligase from Borrelia turicatae (strain 91E135).